A 218-amino-acid chain; its full sequence is Glutathione S-transferase class-mu 26 kDa isozyme 7 (218 aa).

The GST N-terminal domain maps to 2-83 (PAKLGYWKIR…YIADKHGMLG (82 aa)). Residues 7 to 8 (YW), 41 to 45 (WLGDK), 54 to 55 (NL), and 67 to 68 (QS) each bind glutathione. A GST C-terminal domain is found at 85-203 (TPEERARISM…KSERFIKWPL (119 aa)). Y111 contributes to the substrate binding site.

The protein belongs to the GST superfamily. Mu family. As to quaternary structure, homodimer.

It carries out the reaction RX + glutathione = an S-substituted glutathione + a halide anion + H(+). Conjugation of reduced glutathione to a wide number of exogenous and endogenous hydrophobic electrophiles. Functionally, GST isoenzymes appear to play a central role in the parasite detoxification system. Other functions are also suspected including a role in increasing the solubility of haematin in the parasite gut. This chain is Glutathione S-transferase class-mu 26 kDa isozyme 7, found in Fasciola hepatica (Liver fluke).